The chain runs to 221 residues: Histone H1C (221 aa).

2 stretches are compositionally biased toward low complexity: residues 1-11 (MTETAATETTP) and 27-44 (KKAAGGAKAKKPSGPSAS). 2 disordered regions span residues 1–44 (MTET…PSAS) and 123–221 (AKKK…AAKK). The H15 domain occupies 39–112 (SGPSASELIV…GASGSFKLNK (74 aa)). Composition is skewed to basic residues over residues 123-150 (AKKKLVAPKAKKPVAAKKKPKSPKKPKK) and 158-221 (SPKK…AAKK).

The protein belongs to the histone H1/H5 family.

It is found in the nucleus. Its subcellular location is the chromosome. Its function is as follows. Histones H1 are necessary for the condensation of nucleosome chains into higher-order structures. In Xenopus laevis (African clawed frog), this protein is Histone H1C.